Here is a 275-residue protein sequence, read N- to C-terminus: 2,3,4,5-tetrahydropyridine-2,6-dicarboxylate N-succinyltransferase (275 aa).

The protein belongs to the transferase hexapeptide repeat family.

The protein resides in the cytoplasm. The enzyme catalyses (S)-2,3,4,5-tetrahydrodipicolinate + succinyl-CoA + H2O = (S)-2-succinylamino-6-oxoheptanedioate + CoA. Its pathway is amino-acid biosynthesis; L-lysine biosynthesis via DAP pathway; LL-2,6-diaminopimelate from (S)-tetrahydrodipicolinate (succinylase route): step 1/3. This Ralstonia pickettii (strain 12J) protein is 2,3,4,5-tetrahydropyridine-2,6-dicarboxylate N-succinyltransferase.